A 453-amino-acid polypeptide reads, in one-letter code: GTPase Der (453 aa).

2 EngA-type G domains span residues 3 to 167 (PIIV…INSK) and 188 to 361 (VKIA…HTSQ). GTP is bound by residues 9–16 (GRTNVGKS), 57–61 (DTAGI), 119–122 (NKID), 194–201 (GKPNVGKS), 241–245 (DTAGM), and 306–309 (NKCD). The region spanning 362-446 (KKIKTSQVMK…PIKIQFKETM (85 aa)) is the KH-like domain.

The protein belongs to the TRAFAC class TrmE-Era-EngA-EngB-Septin-like GTPase superfamily. EngA (Der) GTPase family. As to quaternary structure, associates with the 50S ribosomal subunit.

In terms of biological role, GTPase that plays an essential role in the late steps of ribosome biogenesis. The sequence is that of GTPase Der from Buchnera aphidicola subsp. Schizaphis graminum (strain Sg).